A 282-amino-acid polypeptide reads, in one-letter code: Sulfur carrier protein FdhD (282 aa).

Residue Cys126 is the Cysteine persulfide intermediate of the active site. 265 to 270 (FVRNNR) contributes to the Mo-bis(molybdopterin guanine dinucleotide) binding site.

This sequence belongs to the FdhD family.

It is found in the cytoplasm. Its function is as follows. Required for formate dehydrogenase (FDH) activity. Acts as a sulfur carrier protein that transfers sulfur from IscS to the molybdenum cofactor prior to its insertion into FDH. The protein is Sulfur carrier protein FdhD of Thermoplasma acidophilum (strain ATCC 25905 / DSM 1728 / JCM 9062 / NBRC 15155 / AMRC-C165).